A 745-amino-acid chain; its full sequence is Copper-transporting ATPase (745 aa).

Residues 1–67 (MKESFYIEGM…LIEKLGYSPK (67 aa)) form the HMA domain. The Cytoplasmic portion of the chain corresponds to 1 to 83 (MKESFYIEGM…KKEFFSPNVK (83 aa)). Residues cysteine 12 and cysteine 15 each contribute to the Cu cation site. A helical transmembrane segment spans residues 84 to 104 (LALAVIFTLFVVYLSMGAMLS). Residues 105–124 (PSLLPKSLLAIDNHSNFLNA) lie on the Extracellular side of the membrane. The chain crosses the membrane as a helical span at residues 125 to 144 (CLQLIGTLIVMHWGRDFYIQ). Over 145–151 (GFKALWH) the chain is Cytoplasmic. The chain crosses the membrane as a helical span at residues 152-172 (RQPNMSSLIAIGTSAALISSL). The Extracellular portion of the chain corresponds to 173–194 (WQLYLVYTDHYTDQWSYGHYYF). The chain crosses the membrane as a helical span at residues 195–215 (ESVCVILMFVMVGKRIENVSK). Residues 216-343 (DKALDAMQAL…KAEISRLADK (128 aa)) are Cytoplasmic-facing. The chain crosses the membrane as a helical span at residues 344–366 (VSSVFVPSVIAIAILAFVVWLII). Topologically, residues 367–379 (APKPDFWWNFGIA) are extracellular. A helical transmembrane segment spans residues 380 to 397 (LEVFVSVLVISCPCALGL). Over 398–685 (ATLMSILVAN…KLSQATIKNI (288 aa)) the chain is Cytoplasmic. The 4-aspartylphosphate intermediate role is filled by aspartate 435. The Mg(2+) site is built by aspartate 631 and aspartate 635. The helical transmembrane segment at 686–705 (KENLFWAFCYNSVFIPLACG) threads the bilayer. Over 706-716 (VLYKANIMLSP) the chain is Extracellular. A helical membrane pass occupies residues 717–735 (AIAGLAMSLSSVSVVLNSQ). The Cytoplasmic segment spans residues 736–745 (RLRNFKIKDH).

The protein belongs to the cation transport ATPase (P-type) (TC 3.A.3) family. Type IB subfamily.

The protein resides in the cell membrane. It carries out the reaction Cu(2+)(in) + ATP + H2O = Cu(2+)(out) + ADP + phosphate + H(+). In terms of biological role, probably involved in copper export. The polypeptide is Copper-transporting ATPase (copA) (Helicobacter pylori (Campylobacter pylori)).